The following is a 219-amino-acid chain: MPFSRRRRVVRRRKPVRRLRRRRRRFFKRAGRGSFRVKLTRFVSITQDISKTTQFSFEITPSDFTEFATLADAFEAVRFTRAKVTVLPQQNVSNNSTSLIPAYCMFPWHKELPTVATFNGFLSIDRAKCFRGTQVGIQHYVPSTLDSIQTKGAAGYEVQSVQTKYKPTIQISGGASTVVLYTGALGMQALSDAPENAQAHYNIKIDMWCTFINQTSFNK.

Residues 5–29 (RRRRVVRRRKPVRRLRRRRRRFFKR) form a nuclear localization signals region.

This sequence belongs to the circoviridae capsid protein family. Homomultimer. Assembles in the nucleus, presumably in an immature form, then migrates to the cytoplasm once assembled as mature virion. Interacts with Rep; this interaction relocates Rep into the nucleus.

The protein resides in the host nucleus. Its subcellular location is the virion. Self-assembles to form the virion icosahedral capsid with a T=1 symmetry. This very small capsid (17-22 nm in diameter) allows the virus to be very stable in the environment and resistant to some disinfectants, including detergents. Essential for the initial attachment to heparan sulfate moieties and chondroitin sulfate B of the host cell surface proteoglycans. After attachment, the virus is endocytosed and traffics to the nucleus. The capsid protein binds and transports the viral genome and Rep across the nuclear envelope. This is Capsid protein (Cap) from Homo sapiens (Human).